A 1020-amino-acid chain; its full sequence is FERM domain-containing protein 4A (1020 aa).

The FERM domain occupies 5–307 (RRCQVHLLDD…SQHQFYLDRK (303 aa)). The interval 343-405 (KGKIISGSSG…RLCLREAELT (63 aa)) is necessary for interaction with CYTH1. The span at 351-367 (SGSLLSSGSQESDSSQS) shows a compositional bias: low complexity. A disordered region spans residues 351-371 (SGSLLSSGSQESDSSQSAKKD). Positions 367–401 (SAKKDMLAALKSRQEALEETLRQRLEELKRLCLRE) form a coiled coil. Ser-515 carries the post-translational modification Phosphoserine. Positions 538–665 (DEDSQVTSTI…MPSTPDLRVR (128 aa)) are disordered. The segment covering 542–551 (QVTSTISPLQ) has biased composition (polar residues). The span at 556 to 572 (GLPPRPPSSHNRPPPPQ) shows a compositional bias: pro residues. The necessary for tight junction and adherens junction localization; Requires for interaction with PARD3 stretch occupies residues 565 to 920 (HNRPPPPQSL…QWYQRSTASH (356 aa)). A phosphoserine mark is found at Ser-590 and Ser-601. Positions 609–624 (VKKRSSHGHSSSHKRF) are enriched in basic residues. Residues 626 to 658 (STGSCTEAGVSSSLQNSPIRSLPHWNSQSSMPS) are compositionally biased toward polar residues. A phosphoserine mark is found at Ser-666 and Ser-696. Disordered regions lie at residues 698–741 (ESQG…HSSS) and 757–810 (AEDS…QSQP). Over residues 773-796 (RAAGALGSASSGSMPNLAARSGAA) the composition is skewed to low complexity. 3 positions are modified to phosphoserine: Ser-785, Ser-854, and Ser-882. Disordered regions lie at residues 862-949 (KESW…STFV) and 961-1020 (CKAT…STDE). The span at 893-910 (DGAHDKGSGRAAVSDELR) shows a compositional bias: basic and acidic residues. Positions 927-947 (SHTSSTSSDSGSQYSTSSQST) are enriched in low complexity. Polar residues-rich tracts occupy residues 967-981 (ALPQ…SSEI), 994-1004 (TWQTGEATENS), and 1011-1020 (ESPTHQSTDE).

As to quaternary structure, interacts (via coiled-coil domain) with CYTH1 (via coiled-coil domain). Interacts with PARD3 (via coiled-coil domain). Found in a complex with PARD3, CYTH1 and FRMD4A. Interacts with CYTH2. Interacts with CYTH3.

It is found in the cytoplasm. Its subcellular location is the cytoskeleton. The protein resides in the cell junction. The protein localises to the adherens junction. It localises to the tight junction. Its function is as follows. Scaffolding protein that regulates epithelial cell polarity by connecting ARF6 activation with the PAR3 complex. Plays a redundant role with FRMD4B in epithelial polarization. May regulate MAPT secretion by activating ARF6-signaling. The polypeptide is FERM domain-containing protein 4A (Frmd4a) (Mus musculus (Mouse)).